Reading from the N-terminus, the 336-residue chain is tRNA(Ile)-lysidine synthase (336 aa).

40–45 contacts ATP; that stretch reads SGGQDS.

It belongs to the tRNA(Ile)-lysidine synthase family.

Its subcellular location is the cytoplasm. It carries out the reaction cytidine(34) in tRNA(Ile2) + L-lysine + ATP = lysidine(34) in tRNA(Ile2) + AMP + diphosphate + H(+). Functionally, ligates lysine onto the cytidine present at position 34 of the AUA codon-specific tRNA(Ile) that contains the anticodon CAU, in an ATP-dependent manner. Cytidine is converted to lysidine, thus changing the amino acid specificity of the tRNA from methionine to isoleucine. This is tRNA(Ile)-lysidine synthase from Prochlorococcus marinus subsp. pastoris (strain CCMP1986 / NIES-2087 / MED4).